Here is a 529-residue protein sequence, read N- to C-terminus: Bifunctional purine biosynthesis protein PurH (529 aa).

The MGS-like domain occupies M1–V148. K287 is subject to N6-acetyllysine.

It belongs to the PurH family.

It catalyses the reaction (6R)-10-formyltetrahydrofolate + 5-amino-1-(5-phospho-beta-D-ribosyl)imidazole-4-carboxamide = 5-formamido-1-(5-phospho-D-ribosyl)imidazole-4-carboxamide + (6S)-5,6,7,8-tetrahydrofolate. The enzyme catalyses IMP + H2O = 5-formamido-1-(5-phospho-D-ribosyl)imidazole-4-carboxamide. The protein operates within purine metabolism; IMP biosynthesis via de novo pathway; 5-formamido-1-(5-phospho-D-ribosyl)imidazole-4-carboxamide from 5-amino-1-(5-phospho-D-ribosyl)imidazole-4-carboxamide (10-formyl THF route): step 1/1. It functions in the pathway purine metabolism; IMP biosynthesis via de novo pathway; IMP from 5-formamido-1-(5-phospho-D-ribosyl)imidazole-4-carboxamide: step 1/1. The polypeptide is Bifunctional purine biosynthesis protein PurH (Escherichia coli (strain SMS-3-5 / SECEC)).